Consider the following 103-residue polypeptide: Large ribosomal subunit protein bL21 (103 aa).

This sequence belongs to the bacterial ribosomal protein bL21 family. In terms of assembly, part of the 50S ribosomal subunit. Contacts protein L20.

Functionally, this protein binds to 23S rRNA in the presence of protein L20. The chain is Large ribosomal subunit protein bL21 from Actinobacillus pleuropneumoniae serotype 7 (strain AP76).